A 588-amino-acid chain; its full sequence is Catechol oxidase B, chloroplastic (588 aa).

The N-terminal 88 residues, 1–88 (SSSSTTTIPL…AANLAPLASA (88 aa)), are a transit peptide targeting the chloroplast. 2 disulfide bridges follow: Cys-99–Cys-115 and Cys-114–Cys-181. Cu cation contacts are provided by His-180, His-198, His-207, His-329, His-333, and His-364. A cross-link (2'-(S-cysteinyl)-histidine (Cys-His)) is located at residues 184 to 198 (CNGAYKVGGKELQVH).

This sequence belongs to the tyrosinase family. Requires Cu(2+) as cofactor.

Its subcellular location is the plastid. It localises to the chloroplast thylakoid lumen. The enzyme catalyses 2 catechol + O2 = 2 1,2-benzoquinone + 2 H2O. In terms of biological role, catalyzes the oxidation of mono- and o-diphenols to o-diquinones. The sequence is that of Catechol oxidase B, chloroplastic from Solanum tuberosum (Potato).